The sequence spans 771 residues: Ribonucleoside-diphosphate reductase large subunit (771 aa).

Positions 1–92 (MFVIKRNGYK…VSNLHKETKK (92 aa)) constitute an ATP-cone domain. ATP is bound by residues 5-6 (KR), 11-17 (ENVMFDK), T53, D57, and K88. S202 and S217 together coordinate GDP. Residues 226–228 (DSI), K243, and R256 contribute to the dTTP site. N427 serves as a coordination point for GDP. N427 acts as the Proton acceptor in catalysis. The Cysteine radical intermediate role is filled by C429. GDP is bound by residues E431 and 603–606 (TAST). The active-site Proton acceptor is the E431.

The protein belongs to the ribonucleoside diphosphate reductase large chain family. Interacts with RNR2/OPG047 subunit. Requires Mg(2+) as cofactor.

It catalyses the reaction a 2'-deoxyribonucleoside 5'-diphosphate + [thioredoxin]-disulfide + H2O = a ribonucleoside 5'-diphosphate + [thioredoxin]-dithiol. Ribonucleoside-diphosphate reductase holoenzyme provides the precursors necessary for viral DNA synthesis. Allows virus growth in non-dividing cells. Catalyzes the biosynthesis of deoxyribonucleotides from the corresponding ribonucleotides. This Homo sapiens (Human) protein is Ribonucleoside-diphosphate reductase large subunit (OPG080).